We begin with the raw amino-acid sequence, 388 residues long: Chorismate synthase (388 aa).

Positions 39 and 45 each coordinate NADP(+). FMN-binding positions include 130 to 132 (RSS), 251 to 252 (NA), glycine 296, 311 to 315 (KPIPT), and arginine 337.

Belongs to the chorismate synthase family. Homotetramer. It depends on FMNH2 as a cofactor.

It catalyses the reaction 5-O-(1-carboxyvinyl)-3-phosphoshikimate = chorismate + phosphate. It functions in the pathway metabolic intermediate biosynthesis; chorismate biosynthesis; chorismate from D-erythrose 4-phosphate and phosphoenolpyruvate: step 7/7. Its function is as follows. Catalyzes the anti-1,4-elimination of the C-3 phosphate and the C-6 proR hydrogen from 5-enolpyruvylshikimate-3-phosphate (EPSP) to yield chorismate, which is the branch point compound that serves as the starting substrate for the three terminal pathways of aromatic amino acid biosynthesis. This reaction introduces a second double bond into the aromatic ring system. The sequence is that of Chorismate synthase from Streptococcus pneumoniae serotype 2 (strain D39 / NCTC 7466).